A 495-amino-acid polypeptide reads, in one-letter code: Sulfhydryl oxidase 2 (495 aa).

An N-terminal signal peptide occupies residues 1–15; that stretch reads MSLVHLLLFAGLVIA. One can recognise a Thioredoxin domain in the interval 29–164; it reads EISDQKDKAV…LLNWINKQIG (136 aa). A glycan (N-linked (GlcNAc...) asparagine) is linked at N41. Catalysis depends on nucleophile residues C66 and C69. The cysteines at positions 66 and 69 are disulfide-linked. N-linked (GlcNAc...) asparagine glycans are attached at residues N182, N257, N266, and N292. A disulfide bridge links C287 with C299. One can recognise an ERV/ALR sulfhydryl oxidase domain in the interval 290-392; the sequence is SKNDTRGFSC…GDPKFPKIIW (103 aa). Residues R295, W302, H306, E336, H340, 363-370, K389, and W392 contribute to the FAD site; that span reads WSTHNKVN. A disulfide bridge links C334 with C337. C398 and C401 are disulfide-bonded.

It depends on FAD as a cofactor.

Its subcellular location is the secreted. It carries out the reaction 2 R'C(R)SH + O2 = R'C(R)S-S(R)CR' + H2O2. Functionally, catalyzes the oxidation of sulfhydryl groups in peptide and protein thiols to disulfides with the reduction of oxygen to hydrogen peroxide. May contribute to disulfide bond formation in a variety of secreted proteins. In Arabidopsis thaliana (Mouse-ear cress), this protein is Sulfhydryl oxidase 2 (QSOX2).